A 566-amino-acid chain; its full sequence is Serine/threonine-protein kinase ppk14 (566 aa).

The segment covering 1–31 (MNELHDGESSEEGRINVEDHLEEAKKDDTGH) has biased composition (basic and acidic residues). Disordered stretches follow at residues 1-39 (MNEL…GTAK) and 60-152 (SRKK…EKLK). The segment covering 74 to 85 (AANQSPSGAPES) has biased composition (polar residues). The segment covering 119-129 (SFFKSGRKKKD) has biased composition (basic residues). The span at 134-145 (RNVSRSNGADTS) shows a compositional bias: polar residues. The region spanning 195-485 (FEKVFLLGKG…AADVKLHPFF (291 aa)) is the Protein kinase domain. Residues 201 to 209 (LGKGDVGRV) and Lys224 each bind ATP. Asp320 (proton acceptor) is an active-site residue. Position 379 is a phosphothreonine (Thr379). Phosphoserine is present on Ser381. Thr385 bears the Phosphothreonine mark.

It belongs to the protein kinase superfamily. Ser/Thr protein kinase family. KIN82 subfamily.

It catalyses the reaction L-seryl-[protein] + ATP = O-phospho-L-seryl-[protein] + ADP + H(+). The catalysed reaction is L-threonyl-[protein] + ATP = O-phospho-L-threonyl-[protein] + ADP + H(+). In Schizosaccharomyces pombe (strain 972 / ATCC 24843) (Fission yeast), this protein is Serine/threonine-protein kinase ppk14 (ppk14).